A 514-amino-acid polypeptide reads, in one-letter code: Protein phosphatase 1H (514 aa).

Residue S7 is modified to Phosphoserine. Positions A77 to L507 constitute a PPM-type phosphatase domain. The segment at A109–E135 is disordered. The residue at position 113 (T113) is a Phosphothreonine. S124 and S211 each carry phosphoserine. At R213 the chain carries Omega-N-methylarginine. At S221 the chain carries Phosphoserine. Phosphothreonine is present on T224. S422 carries the phosphoserine modification.

This sequence belongs to the PP2C family.

It is found in the nucleus. The protein localises to the cytoplasm. The enzyme catalyses O-phospho-L-seryl-[protein] + H2O = L-seryl-[protein] + phosphate. It carries out the reaction O-phospho-L-threonyl-[protein] + H2O = L-threonyl-[protein] + phosphate. Dephosphorylates CDKN1B at 'Thr-187', thus removing a signal for proteasomal degradation. This Homo sapiens (Human) protein is Protein phosphatase 1H (PPM1H).